The sequence spans 176 residues: NAD(P)H-quinone oxidoreductase subunit 6, chloroplastic (176 aa).

The next 5 membrane-spanning stretches (helical) occupy residues 10-30, 33-53, 60-80, 95-115, and 152-172; these read ILMLFGGFILLLGGLGVVLLT, IYSAFSLGLVLVCISLFYFLL, VAQLLIYVGAINVLIIFAVMF, IGDGFTSLVCITFVFSLMTTI, and FYLPFELISIILLVSLIGAIT.

Belongs to the complex I subunit 6 family. As to quaternary structure, NDH is composed of at least 16 different subunits, 5 of which are encoded in the nucleus.

The protein localises to the plastid. It is found in the chloroplast thylakoid membrane. The catalysed reaction is a plastoquinone + NADH + (n+1) H(+)(in) = a plastoquinol + NAD(+) + n H(+)(out). It catalyses the reaction a plastoquinone + NADPH + (n+1) H(+)(in) = a plastoquinol + NADP(+) + n H(+)(out). Its function is as follows. NDH shuttles electrons from NAD(P)H:plastoquinone, via FMN and iron-sulfur (Fe-S) centers, to quinones in the photosynthetic chain and possibly in a chloroplast respiratory chain. The immediate electron acceptor for the enzyme in this species is believed to be plastoquinone. Couples the redox reaction to proton translocation, and thus conserves the redox energy in a proton gradient. In Hordeum vulgare (Barley), this protein is NAD(P)H-quinone oxidoreductase subunit 6, chloroplastic (ndhG).